The primary structure comprises 253 residues: Ribonuclease HII (253 aa).

Residues 70 to 253 (PLVAGIDEVG…RSFSPVQNAL (184 aa)) enclose the RNase H type-2 domain. A divalent metal cation contacts are provided by Asp76, Glu77, and Asp168.

This sequence belongs to the RNase HII family. It depends on Mn(2+) as a cofactor. Mg(2+) is required as a cofactor.

The protein resides in the cytoplasm. The enzyme catalyses Endonucleolytic cleavage to 5'-phosphomonoester.. Its function is as follows. Endonuclease that specifically degrades the RNA of RNA-DNA hybrids. The sequence is that of Ribonuclease HII from Latilactobacillus sakei subsp. sakei (strain 23K) (Lactobacillus sakei subsp. sakei).